Consider the following 525-residue polypeptide: MPRTKEEPELSEFEKQRAANIAERDALLKKLTLEAQSAGIFSKPPASKSSSQTKKKPAPKRVKKEDEPPVPRRMSSRLRGLAAESEIAKRKAEDEYQAMKAAAQAKRMRISGDLNVGDIVVGENKWNETGLQGLGIVNSAQRYQRTFGEEDIKKTTNKELKELREKMSGLQLWEPWEPNRIKITRERIYSMLFHPTESKPLIFAGDKTGHLGILDASQQPDQNESDEEDEYPDPTITTIKPHTNTISAMHIHPSDPSKLYSGSYDSSIRALDLEKSVATEAYAPASSSDDEPLSGIDMAPTDPHVLYFTTLDGFFGRHDMRVSSKANPGDGSAVTFYQLSEKKIGGFSLCPTQPHYMATASLDRTMKVWDLRHLSTKHPKPVGEHESSLSVSHAAFNQKGQIATTSYDNSIKIYDLASKGLKDWKPNHTLSEDEMAPDAVIRHNCQTGKWVTILRPQWQACPDSPVERFCIGNMNRFVDIYTSTGEQLAQLGADVITAVPAVAVFHRTQNWVVGGTGSAKVCLWM.

Disordered stretches follow at residues 38–86 and 212–233; these read AGIF…AESE and GILD…EYPD. A compositionally biased stretch (basic residues) spans 53–62; the sequence is TKKKPAPKRV. WD repeat units lie at residues 183-224, 241-281, 288-328, 339-379, 384-425, 448-491, and 494-525; these read ITRE…DQNE, PHTN…ATEA, SDDE…KANP, LSEK…TKHP, EHES…KDWK, GKWV…LAQL, and DVIT…CLWM. Residues 223–232 are compositionally biased toward acidic residues; the sequence is NESDEEDEYP.

It belongs to the WD repeat DDB2/WDR76 family.

Functionally, DNA-binding protein that binds to both single- and double-stranded DNA. Binds preferentially to UV-damaged DNA. May be involved in DNA-metabolic processes. The protein is DNA damage-binding protein CMR1 of Coccidioides immitis (strain RS) (Valley fever fungus).